A 700-amino-acid chain; its full sequence is E3 ubiquitin-protein ligase SspH1 (700 aa).

The segment at 1–395 is interaction with target proteins; that stretch reads MFNIRNTQPS…HSGIRIHFDM (395 aa). LRR repeat units follow at residues 217–238, 239–257, 258–279, 280–297, 298–319, 320–337, 338–360, and 361–381; these read HITTLVIPDNNLTSLPELPEGL, RELEVSGNLQLTSLPSLPQ, GLQKLWAYNNWLASLPTLPPGL, GDLAVSNNQLTSLPEMPP, ALRELRVSGNNLTSLPALPSGL, QKLWAYNNRLTSLPEMSP, GLQELDVSHNQLTRLPQSLTGLS, and SAARVYLDGNPLSVRTLQALR. Residues 396–403 form a linker region; the sequence is AGPSVPRE. The segment at 404–700 is E3 ubiquitin-protein ligase catalytic domain; the sequence is ARALHLAVAD…SYLTARWRLN (297 aa). Residues 406–700 enclose the NEL domain; the sequence is ALHLAVADWL…SYLTARWRLN (295 aa). Cys492 (glycyl thioester intermediate) is an active-site residue.

Belongs to the LRR-containing bacterial E3 ligase family. Interacts (via leucine-rich repeat region) with host PKN1 (via the second REM repeat). In terms of processing, ubiquitinated in the presence of host E1 ubiquitin-activating enzyme, E2 ubiquitin-conjugating enzyme and ubiquitin.

The protein localises to the secreted. It is found in the host cytoplasm. It localises to the host nucleus. The catalysed reaction is S-ubiquitinyl-[E2 ubiquitin-conjugating enzyme]-L-cysteine + [acceptor protein]-L-lysine = [E2 ubiquitin-conjugating enzyme]-L-cysteine + N(6)-ubiquitinyl-[acceptor protein]-L-lysine.. Exists in an autoinhibited state in the absence of substrate protein, due to interactions of the leucine-rich repeat domain with the catalytic domain. Is activated upon binding to a substrate protein. Functionally, effector proteins function to alter host cell physiology and promote bacterial survival in host tissues. This protein is an E3 ubiquitin-protein ligase that interferes with the host's ubiquitination pathway and targets host proteins for proteasomal degradation. Can ubiquitinate ubiquitin, giving rise to polyubiquitin chains (in vitro). Polyubiquitinates host PKN1, leading to its proteasomal degradation. Down-modulates production of host pro-inflammatory cytokines by inhibiting NF-kappa-B-dependent gene expression; this depends only partially on its E3 ubiquitin-protein ligase activity. The polypeptide is E3 ubiquitin-protein ligase SspH1 (sspH1) (Salmonella typhimurium (strain 14028s / SGSC 2262)).